The primary structure comprises 602 residues: ATP-dependent RNA helicase DeaD (602 aa).

The Q motif motif lies at 6-34 (MTFSSFGLNSCIITALNDIGYVQPSPIQA). The region spanning 37 to 208 (IPYLIKGKDV…RRFMKNPKEI (172 aa)) is the Helicase ATP-binding domain. Position 50 to 57 (50 to 57 (AQTGSGKT)) interacts with ATP. The short motif at 156-159 (DEAD) is the DEAD box element. The 148-residue stretch at 231 to 378 (KTDALIRFLE…EVNLPKSDFL (148 aa)) folds into the Helicase C-terminal domain.

The protein belongs to the DEAD box helicase family. DeaD/CsdA subfamily.

It localises to the cytoplasm. It catalyses the reaction ATP + H2O = ADP + phosphate + H(+). Functionally, DEAD-box RNA helicase involved in various cellular processes at low temperature, including ribosome biogenesis, mRNA degradation and translation initiation. This is ATP-dependent RNA helicase DeaD from Buchnera aphidicola subsp. Baizongia pistaciae (strain Bp).